A 479-amino-acid chain; its full sequence is Lactaldehyde dehydrogenase (479 aa).

Leu150 provides a ligand contact to NAD(+). Position 161 (Arg161) interacts with (S)-lactate. NAD(+)-binding positions include 176 to 179 (KPSE), Gln214, and Ser230. Glu251 contributes to the (S)-lactate binding site. Catalysis depends on residues Glu251 and Cys285. Position 286 (Asn286) interacts with (S)-lactate. NAD(+) is bound at residue Arg336. Residues Glu443 and His449 each contribute to the (S)-lactate site.

It belongs to the aldehyde dehydrogenase family. Homotetramer.

It carries out the reaction (S)-lactaldehyde + NAD(+) + H2O = (S)-lactate + NADH + 2 H(+). It catalyses the reaction glycolaldehyde + NAD(+) + H2O = glycolate + NADH + 2 H(+). The protein operates within carbohydrate degradation; L-fucose degradation. Its pathway is carbohydrate degradation; L-rhamnose degradation. With respect to regulation, substrate inhibition is very strong with lactaldehyde, diminishing progressively with glycolaldehyde, glyceraldehyde or methylglyoxal. Inhibited by p-hydroxy mercuribenzoate and by some cations, including Mn(2+), Ca(2+), Cu(2+) and Zn(2+). Inhibited by NADH. Functionally, catalyzes the irreversible oxidation of L-lactaldehyde to L-lactate. Also shows high activity with glycolaldehyde and L-glyceraldehyde. Has weaker activity with various aldehydes such as methylglyoxal, propionaldehyde or benzaldehyde. Involved in the degradation of lactaldehyde produced during metabolism of L-fucose and L-rhamnose. It may be involved in several other metabolic pathways. The protein is Lactaldehyde dehydrogenase (aldA) of Escherichia coli (strain K12).